An 873-amino-acid chain; its full sequence is Bifunctional uridylyltransferase/uridylyl-removing enzyme (873 aa).

The interval 1–332 (MAFQSPLTFN…NGGETEPAVI (332 aa)) is uridylyltransferase. The interval 333-692 (INEDFQRRGR…MSKKATRGGT (360 aa)) is uridylyl-removing. The HD domain maps to 451–573 (VDEHSVRLLN…VRDEERLEYL (123 aa)). 2 ACT domains span residues 693-773 (EVFV…VKTR) and 800-873 (LMEL…ELAP).

The protein belongs to the GlnD family. Mg(2+) is required as a cofactor.

The enzyme catalyses [protein-PII]-L-tyrosine + UTP = [protein-PII]-uridylyl-L-tyrosine + diphosphate. It carries out the reaction [protein-PII]-uridylyl-L-tyrosine + H2O = [protein-PII]-L-tyrosine + UMP + H(+). Uridylyltransferase (UTase) activity is inhibited by glutamine, while glutamine activates uridylyl-removing (UR) activity. Modifies, by uridylylation and deuridylylation, the PII regulatory proteins (GlnB and homologs), in response to the nitrogen status of the cell that GlnD senses through the glutamine level. Under low glutamine levels, catalyzes the conversion of the PII proteins and UTP to PII-UMP and PPi, while under higher glutamine levels, GlnD hydrolyzes PII-UMP to PII and UMP (deuridylylation). Thus, controls uridylylation state and activity of the PII proteins, and plays an important role in the regulation of nitrogen assimilation and metabolism. This is Bifunctional uridylyltransferase/uridylyl-removing enzyme from Vibrio vulnificus (strain CMCP6).